The chain runs to 291 residues: Methionine aminopeptidase (291 aa).

His-118 serves as a coordination point for substrate. A divalent metal cation contacts are provided by Asp-135, Asp-146, and His-209. His-216 provides a ligand contact to substrate. Glu-241 and Glu-273 together coordinate a divalent metal cation.

The protein belongs to the peptidase M24A family. Methionine aminopeptidase type 1 subfamily. As to quaternary structure, monomer. Co(2+) is required as a cofactor. Requires Zn(2+) as cofactor. It depends on Mn(2+) as a cofactor. Fe(2+) serves as cofactor.

It carries out the reaction Release of N-terminal amino acids, preferentially methionine, from peptides and arylamides.. Removes the N-terminal methionine from nascent proteins. The N-terminal methionine is often cleaved when the second residue in the primary sequence is small and uncharged (Met-Ala-, Cys, Gly, Pro, Ser, Thr, or Val). Requires deformylation of the N(alpha)-formylated initiator methionine before it can be hydrolyzed. The protein is Methionine aminopeptidase of Chlamydia trachomatis serovar D (strain ATCC VR-885 / DSM 19411 / UW-3/Cx).